Consider the following 187-residue polypeptide: 2-oxoglutarate synthase subunit KorC (187 aa).

In terms of assembly, heterotetramer of the KorA, KorB, KorC and KorD subunits.

It catalyses the reaction 2 oxidized [2Fe-2S]-[ferredoxin] + 2-oxoglutarate + CoA = succinyl-CoA + 2 reduced [2Fe-2S]-[ferredoxin] + CO2 + H(+). In Archaeoglobus fulgidus (strain ATCC 49558 / DSM 4304 / JCM 9628 / NBRC 100126 / VC-16), this protein is 2-oxoglutarate synthase subunit KorC (korC).